The chain runs to 249 residues: DNA polymerase sliding clamp 1 (249 aa).

Belongs to the PCNA family. As to quaternary structure, homotrimer. The subunits circularize to form a toroid; DNA passes through its center. Replication factor C (RFC) is required to load the toroid on the DNA. Interacts with TIP.

With respect to regulation, inhibited by interaction with the PCNA inhibitor TIP. Functionally, sliding clamp subunit that acts as a moving platform for DNA processing. Responsible for tethering the catalytic subunit of DNA polymerase and other proteins to DNA during high-speed replication. The chain is DNA polymerase sliding clamp 1 from Thermococcus kodakarensis (strain ATCC BAA-918 / JCM 12380 / KOD1) (Pyrococcus kodakaraensis (strain KOD1)).